A 223-amino-acid chain; its full sequence is Thymidine kinase (223 aa).

ATP contacts are provided by residues 19-26 and 96-99; these read GPMFAGKT and DEVQ. E97 serves as the catalytic Proton acceptor. C153, C156, C191, and H194 together coordinate Zn(2+).

Belongs to the thymidine kinase family. In terms of assembly, homotetramer.

The protein localises to the cytoplasm. The enzyme catalyses thymidine + ATP = dTMP + ADP + H(+). The polypeptide is Thymidine kinase (Ureaplasma urealyticum serovar 10 (strain ATCC 33699 / Western)).